The chain runs to 484 residues: MAKLLALSVCFCFLVLGASSVTFRQQGEENECQFQRLNAQRPDNCIESEGGYIETWNPNNQEFQCAGVALSRFVLRRNALRRPFYSNAPQEIFIYQGSGYFGLIFPGCPGTFEEPIQGSEQFQRPSRHFQGQDQSQRPLDTHQKVHGFREGDLIAVPHGVAFWIYNDQDTDVVAISVLHTNSLHNQLDQFPRRFNLAGKQEQEFLRYQQRSGRQSPKGEEQEQEQENEGGNVFSGFSTEFLSHGFQVNEDIVRNLRGENEREEQGAIVTVKGGLSILVPPEWRQSYQQPGRGDKDFNNGIEETICTATVKMNIGKSTSADIYNPQAGSVRTVNELDLPILNRLGLSAEYGSIHRDAMFVPHYNMNANSMIYALHGGAHVQVVDCNGNRVFDEELQEGQSLVVPQNFAVAAKSQSEHFLYVAFKTNSRASISNLAGKNSYMWNLPEDVVANSYGLQYEQARQLKNNNPFTFLVPPQDSQMIRTVA.

The signal sequence occupies residues 1 to 20 (MAKLLALSVCFCFLVLGASS). 2 disulfides stabilise this stretch: Cys32–Cys65 and Cys108–Cys305. The Cupin type-1 1 domain occupies 35–253 (QRLNAQRPDN…GFQVNEDIVR (219 aa)). Residues 208–233 (QQRSGRQSPKGEEQEQEQENEGGNVF) form a disordered region. The propeptide occupies 295 to 298 (DFNN). The 150-residue stretch at 311-460 (MNIGKSTSAD…SYGLQYEQAR (150 aa)) folds into the Cupin type-1 2 domain. A propeptide spanning residues 479–484 (MIRTVA) is cleaved from the precursor.

This sequence belongs to the 11S seed storage protein (globulins) family. Hexamer; each subunit is composed of an acidic and a basic chain derived from a single precursor and linked by a disulfide bond.

The chain is Arachin Ahy-3 from Arachis hypogaea (Peanut).